A 393-amino-acid chain; its full sequence is MAAVTVEEIRKAQRADGPATVLAIGTATPANYVTQADYPDYYFRITKSEHMTDLKEKFKRMCDKSMIRKRYMHLTEEILKENPNMCAYMAPSLDARQDIVVVEVPKLGKEAAAKAIKEWGQPKSKITHLIFCTTSGVDMPGCDYQLTKLLGLRPSVKRFMMYQQGCFAGGTVLRLAKDLAENNRGARVLVVCSEITAVTFRGPVDTHLDSLVGQALFGDGAAAVIVGADPDESIERPLYQLVSAAQTILPDSDGAIDGHLREVGLTFHLLKDVPGLISKNIEKSLKEAFGPIGISDWNSIFWIAHPGGPAILDQVEEKLELKEEKLRATRHVLSEYGNMSSACVLFILDEMRKKCAEEGMATTGEGLEWGVLFGFGPGLTVETVVLRSVPIKA.

C166 is a catalytic residue.

This sequence belongs to the thiolase-like superfamily. Chalcone/stilbene synthases family.

It catalyses the reaction (E)-4-coumaroyl-CoA + 3 malonyl-CoA + 3 H(+) = 2',4,4',6'-tetrahydroxychalcone + 3 CO2 + 4 CoA. The protein operates within secondary metabolite biosynthesis; flavonoid biosynthesis. Its function is as follows. The primary product of this enzyme is 4,2',4',6'-tetrahydroxychalcone (also termed naringenin-chalcone or chalcone) which can under specific conditions spontaneously isomerize into naringenin. This is Chalcone synthase 3 (CHS3) from Ruta graveolens (Common rue).